We begin with the raw amino-acid sequence, 226 residues long: 7-cyano-7-deazaguanine synthase (226 aa).

Residue 12–22 (LSGGLDSATVV) coordinates ATP. Positions 191, 201, 204, and 207 each coordinate Zn(2+).

This sequence belongs to the QueC family. Zn(2+) is required as a cofactor.

It carries out the reaction 7-carboxy-7-deazaguanine + NH4(+) + ATP = 7-cyano-7-deazaguanine + ADP + phosphate + H2O + H(+). Its pathway is purine metabolism; 7-cyano-7-deazaguanine biosynthesis. In terms of biological role, catalyzes the ATP-dependent conversion of 7-carboxy-7-deazaguanine (CDG) to 7-cyano-7-deazaguanine (preQ(0)). The chain is 7-cyano-7-deazaguanine synthase from Pseudomonas syringae pv. tomato (strain ATCC BAA-871 / DC3000).